The chain runs to 433 residues: WD repeat domain phosphoinositide-interacting protein 1 (433 aa).

The Nuclear receptor interaction signature appears at 127–132 (LLKTLL). 2 WD repeats span residues 136-177 (RNPH…CECT) and 180-220 (AHDS…KLYE). The L/FRRG motif signature appears at 221–224 (FRRG). 2 WD repeats span residues 226 to 265 (KRYV…ERSE) and 296 to 346 (DRAF…GGEC).

Belongs to the WD repeat PROPPIN family.

The protein localises to the golgi apparatus. The protein resides in the trans-Golgi network. It localises to the endosome. It is found in the cytoplasmic vesicle. Its subcellular location is the clathrin-coated vesicle. The protein localises to the preautophagosomal structure membrane. The protein resides in the cytoplasm. It localises to the cytoskeleton. Functionally, component of the autophagy machinery that controls the major intracellular degradation process by which cytoplasmic materials are packaged into autophagosomes and delivered to lysosomes for degradation. Plays an important role in starvation- and calcium-mediated autophagy, as well as in mitophagy. Functions downstream of the ulk1 and PI3-kinases that produce phosphatidylinositol 3-phosphate (PtdIns3P) on membranes of the endoplasmic reticulum once activated. Binds phosphatidylinositol 3-phosphate (PtdIns3P), and maybe other phosphoinositides including PtdIns3,5P2 and PtdIns5P, and is recruited to phagophore assembly sites at the endoplasmic reticulum membranes. There, it assists wipi2 in the recruitment of atg12-atg5-atg16l1, a complex that directly controls the elongation of the nascent autophagosomal membrane. Together with wdr45/wipi4, promotes atg2 (atg2a or atg2b)-mediated lipid transfer by enhancing atg2-association with phosphatidylinositol 3-monophosphate (PI3P)-containing membranes. The sequence is that of WD repeat domain phosphoinositide-interacting protein 1 (wipi1) from Xenopus laevis (African clawed frog).